A 407-amino-acid polypeptide reads, in one-letter code: Spore germination protein KC (407 aa).

The signal sequence occupies residues 1–20 (MVRKCLLAVLMLLSVIVLPG). C21 is lipidated: N-palmitoyl cysteine. C21 is lipidated: S-diacylglycerol cysteine.

Belongs to the GerABKC lipoprotein family.

Its subcellular location is the cell membrane. Functionally, involved in the germination response to the combination of glucose, fructose, L-asparagine, and KCl. The polypeptide is Spore germination protein KC (gerKC) (Bacillus subtilis (strain 168)).